We begin with the raw amino-acid sequence, 64 residues long: Potassium channel toxin kappa-KTx 4.1 (64 aa).

The first 26 residues, Met1–Ala26, serve as a signal peptide directing secretion. Positions Glu27–Glu38 are excised as a propeptide. 2 disulfides stabilise this stretch: Cys43-Cys61 and Cys47-Cys57.

Belongs to the short scorpion toxin superfamily. Potassium channel inhibitor kappa-KTx family. Kappa-KTx 4 subfamily. Expressed by the venom gland.

Its subcellular location is the secreted. Its function is as follows. Potassium channel inhibitor (Kv). This chain is Potassium channel toxin kappa-KTx 4.1, found in Heterometrus petersii (Asian forest scorpion).